Reading from the N-terminus, the 499-residue chain is Probable inactive receptor-like protein kinase At3g56050 (499 aa).

The N-terminal stretch at 1–31 (MSNNWKSVRLRLQNRTLVFLLVILSFGSCYS) is a signal peptide. N14 carries N-linked (GlcNAc...) asparagine glycosylation. The Extracellular portion of the chain corresponds to 32 to 146 (LKSQGDGFLE…SKTSSNSTIP (115 aa)). The disordered stretch occupies residues 80 to 121 (RDRPVARATPPSSSVSTRPDAKRSSTLPPPQKSPPAQHVSAP). A glycan (N-linked (GlcNAc...) asparagine) is linked at N142. Residues 147-167 (IVAGCIAGAVFILLLATGVFF) traverse the membrane as a helical segment. Topologically, residues 168–499 (FKSKAGKSVN…WAELEVLSTA (332 aa)) are cytoplasmic. The region spanning 208 to 474 (EDFSNVIGSC…EVTGRLREIT (267 aa)) is the Protein kinase domain.

The protein resides in the cell membrane. This chain is Probable inactive receptor-like protein kinase At3g56050, found in Arabidopsis thaliana (Mouse-ear cress).